The sequence spans 133 residues: ATP synthase epsilon chain (133 aa).

Belongs to the ATPase epsilon chain family. F-type ATPases have 2 components, CF(1) - the catalytic core - and CF(0) - the membrane proton channel. CF(1) has five subunits: alpha(3), beta(3), gamma(1), delta(1), epsilon(1). CF(0) has three main subunits: a, b and c.

The protein localises to the cell membrane. Its function is as follows. Produces ATP from ADP in the presence of a proton gradient across the membrane. The protein is ATP synthase epsilon chain (atpC) of Alkalihalophilus pseudofirmus (strain ATCC BAA-2126 / JCM 17055 / OF4) (Bacillus pseudofirmus).